The primary structure comprises 230 residues: MVKLVFARHGESEWNKANLFTGWADVDLSEKGTQQAIDAGKLIKEAGIEFDKAYTSVLKRAIKTTNLALEASDQLWVPVEKSWRLNERHYGGLTGKNKAEAAEQFGDEQVHIWRRSYDVLPPKMDRDDEYSAHKDRRYASLDDSVIPDAENLKVTLERALPFWEDKIAPALKDGKNVFVGAHGNSIRALVKHIKKLSDDEIMDVEIPNFPPLVFEFDEKLNVVSEYYLGK.

Substrate contacts are provided by residues 8-15, 21-22, arginine 60, 87-90, lysine 98, 114-115, and 183-184; these read RHGESEWN, TG, ERHY, RR, and GN. Residue histidine 9 is the Tele-phosphohistidine intermediate of the active site. The active-site Proton donor/acceptor is glutamate 87.

This sequence belongs to the phosphoglycerate mutase family. BPG-dependent PGAM subfamily.

It catalyses the reaction (2R)-2-phosphoglycerate = (2R)-3-phosphoglycerate. It functions in the pathway carbohydrate degradation; glycolysis; pyruvate from D-glyceraldehyde 3-phosphate: step 3/5. Its function is as follows. Catalyzes the interconversion of 2-phosphoglycerate and 3-phosphoglycerate. This chain is 2,3-bisphosphoglycerate-dependent phosphoglycerate mutase, found in Streptococcus thermophilus (strain CNRZ 1066).